A 1023-amino-acid chain; its full sequence is Sodium/potassium-transporting ATPase subunit alpha-1 (1023 aa).

Residues 1-5 (MGKGV) constitute a propeptide that is removed on maturation. Residues 1–11 (MGKGVGRDKYE) are compositionally biased toward basic and acidic residues. The segment at 1–38 (MGKGVGRDKYEPAAVSEHGDKKSKKAKKERDMDELKKE) is disordered. Residues 6-87 (GRDKYEPAAV…NALTPPPTTP (82 aa)) lie on the Cytoplasmic side of the membrane. Lys-9 carries the post-translational modification N6-acetyllysine. Tyr-10 is modified (phosphotyrosine). The residue at position 16 (Ser-16) is a Phosphoserine; by PKC. The residue at position 21 (Lys-21) is an N6-acetyllysine. Residue Ser-23 is modified to Phosphoserine; by PKC. The segment covering 28 to 38 (KERDMDELKKE) has biased composition (basic and acidic residues). Residues Ser-40 and Ser-47 each carry the phosphoserine modification. Residues 82 to 84 (PPP) are phosphoinositide-3 kinase binding. Residues 88-108 (EWVKFCRQLFGGFSMLLWIGA) form a helical membrane-spanning segment. Residues 109-131 (ILCFLAYGIRSATEEEPPNDDLY) are Extracellular-facing. A helical transmembrane segment spans residues 132 to 152 (LGVVLSAVVIITGCFSYYQEA). The Cytoplasmic portion of the chain corresponds to 153-288 (KSSKIMESFK…GGQTPIAEEI (136 aa)). The interval 216-235 (SSLTGESEPQTRSPDFTNEN) is disordered. Ser-228 carries the post-translational modification Phosphoserine. The residue at position 260 (Tyr-260) is a Phosphotyrosine. The chain crosses the membrane as a helical span at residues 289-308 (EHFIHLITGVAVFLGVSFFI). The Extracellular segment spans residues 309-320 (LSLILEYTWLEA). Residues 321 to 338 (VIFLIGIIVANVPEGLLA) traverse the membrane as a helical segment. Residues 339 to 772 (TVTVCLTLTA…EEGRLIFDNL (434 aa)) lie on the Cytoplasmic side of the membrane. The active-site 4-aspartylphosphate intermediate is the Asp-376. Phosphoserine is present on residues Ser-452 and Ser-484. Residue Lys-487 participates in ATP binding. Tyr-542 carries the post-translational modification Phosphotyrosine. Positions 596–717 (RAAVPDAVGK…QGAIVAVTGD (122 aa)) are mediates interaction with SCN7A. Lys-661 carries the post-translational modification N6-succinyllysine. Phosphoserine is present on residues Ser-668 and Ser-675. Mg(2+) contacts are provided by Asp-717 and Asp-721. A helical transmembrane segment spans residues 773 to 792 (KKSIAYTLTSNIPEITPFLI). The Extracellular segment spans residues 793 to 802 (FIIANIPLPL). A helical transmembrane segment spans residues 803–823 (GTVTILCIDLGTDMVPAISLA). Over 824-843 (YEQAESDIMKRQPRNPKTDK) the chain is Cytoplasmic. A helical membrane pass occupies residues 844–866 (LVNERLISMAYGQIGMIQALGGF). At 867 to 918 (FTYFVILAENGFLPFHLLGIRETWDDRWINDVEDSYGQQWTYEQRKIVEFTC) the chain is on the extracellular side. Residues 919 to 938 (HTAFFVSIVVVQWADLVICK) form a helical membrane-spanning segment. Over 939 to 951 (TRRNSVFQQGMKN) the chain is Cytoplasmic. Ser-943 is subject to Phosphoserine; by PKA. Residues 952–970 (KILIFGLFEETALAAFLSY) form a helical membrane-spanning segment. Residues 971–985 (CPGMGAALRMYPLKP) are Extracellular-facing. A helical transmembrane segment spans residues 986 to 1006 (TWWFCAFPYSLLIFVYDEVRK). Over 1007-1023 (LIIRRRPGGWVEKETYY) the chain is Cytoplasmic.

This sequence belongs to the cation transport ATPase (P-type) (TC 3.A.3) family. Type IIC subfamily. The sodium/potassium-transporting ATPase is composed of a catalytic alpha subunit, an auxiliary non-catalytic beta subunit and an additional regulatory subunit. Interacts with regulatory subunit FXYD1. Interacts with regulatory subunit FXYD3. Interacts with SLC35G1 and STIM1. Interacts with SIK1. Interacts with CLN3; this interaction regulates the sodium/potassium-transporting ATPase complex localization at the plasma membrane. Interacts with SCN7A; activates ATP1A1 P-type sodium:potassium-exchanging transporter activity which indirectly signals to nearby neurons to regulate sodium homeostasis. In terms of processing, phosphorylation on Tyr-10 modulates pumping activity. Phosphorylation of Ser-943 by PKA modulates the response of ATP1A1 to PKC. Dephosphorylation by protein phosphatase 2A (PP2A) following increases in intracellular sodium, leading to increase catalytic activity. In terms of tissue distribution, expressed in the central nervous system, in most motor and sensory axons of the ventral and dorsal roots, as well as in the large motor neurons of the ventral horn (at protein level).

The protein localises to the cell membrane. It is found in the basolateral cell membrane. Its subcellular location is the sarcolemma. It localises to the cell projection. The protein resides in the axon. The protein localises to the melanosome. The enzyme catalyses K(+)(out) + Na(+)(in) + ATP + H2O = K(+)(in) + Na(+)(out) + ADP + phosphate + H(+). Functionally, this is the catalytic component of the active enzyme, which catalyzes the hydrolysis of ATP coupled with the exchange of sodium and potassium ions across the plasma membrane. This action creates the electrochemical gradient of sodium and potassium ions, providing the energy for active transport of various nutrients. Could also be part of an osmosensory signaling pathway that senses body-fluid sodium levels and controls salt intake behavior as well as voluntary water intake to regulate sodium homeostasis. This chain is Sodium/potassium-transporting ATPase subunit alpha-1 (Atp1a1), found in Rattus norvegicus (Rat).